A 395-amino-acid polypeptide reads, in one-letter code: MKLQGAGCVVAAVLGALFIVNVESHFHKPELQLCKAFGEPCISYDVRSTIGPRCWFKLEFPREKCCNENGKRQSPIDIPDVKSIYKVPQKLRYSSRKFVGHLENTGIQPAFKRKVGADKVYLEGIGSPVGKRYFIENVHFHVGVRHKERQTENTLNGRSFDGEAHIVHIREDFGDLKEAANHPQGLLVISIFLSTSKGERRRDGFDDLIEMIQDVQEFEEEDGPCANVKIPDIFKFKQLIPFHPVWPICKKTFPVADDSDNSGSGVVCNFYLPNGLCGEKKESKINPNELLADDPEYYVFNGGLTTPPCSESVLWLVAKQPRKVSVFYPYVVRNMETQREGEIIGDFGNLRPLQDLNDRPVFLVRFRLKRNWEHGDTAANDNDAMDSPFSVLGIN.

Residues 1–24 (MKLQGAGCVVAAVLGALFIVNVES) form the signal peptide. In terms of domain architecture, Alpha-carbonic anhydrase spans 42–365 (ISYDVRSTIG…LNDRPVFLVR (324 aa)). Zn(2+)-binding residues include H139, H141, and H165.

This sequence belongs to the alpha-carbonic anhydrase family. Requires Zn(2+) as cofactor. Component of the acid-insoluble and acid-soluble organic matrix of calcified layers of the shell (at protein level).

Its subcellular location is the secreted. It catalyses the reaction hydrogencarbonate + H(+) = CO2 + H2O. Its function is as follows. Reversible hydration of carbon dioxide. This chain is Putative carbonic anhydrase 1, found in Lottia gigantea (Giant owl limpet).